A 94-amino-acid polypeptide reads, in one-letter code: Co-chaperonin GroES (94 aa).

This sequence belongs to the GroES chaperonin family. In terms of assembly, heptamer of 7 subunits arranged in a ring. Interacts with the chaperonin GroEL.

The protein resides in the cytoplasm. Together with the chaperonin GroEL, plays an essential role in assisting protein folding. The GroEL-GroES system forms a nano-cage that allows encapsulation of the non-native substrate proteins and provides a physical environment optimized to promote and accelerate protein folding. GroES binds to the apical surface of the GroEL ring, thereby capping the opening of the GroEL channel. In Streptococcus pneumoniae serotype 19F (strain G54), this protein is Co-chaperonin GroES.